The sequence spans 473 residues: Inactive FRIGIDA-like protein 2 (473 aa).

Coiled-coil stretches lie at residues 3–35 (AAES…RSLL) and 306–361 (SLKV…RATK). The disordered stretch occupies residues 356–384 (RKRATKFNSPANPQQPQEQKVDNKRPRVA). The segment covering 361–373 (KFNSPANPQQPQE) has biased composition (polar residues).

Belongs to the Frigida family. Expressed at low levels throughout the plant, with slightly higher expression in developing seeds and the highest expression in pollen.

Inactive FRIGIDA-like 2 protein. This chain is Inactive FRIGIDA-like protein 2 (FRL2), found in Arabidopsis thaliana (Mouse-ear cress).